Consider the following 292-residue polypeptide: Ribosomal RNA small subunit methyltransferase A (292 aa).

S-adenosyl-L-methionine is bound by residues Asn-46, Leu-48, Gly-73, Glu-94, Asp-118, and Asn-136.

Belongs to the class I-like SAM-binding methyltransferase superfamily. rRNA adenine N(6)-methyltransferase family. RsmA subfamily.

The protein resides in the cytoplasm. It carries out the reaction adenosine(1518)/adenosine(1519) in 16S rRNA + 4 S-adenosyl-L-methionine = N(6)-dimethyladenosine(1518)/N(6)-dimethyladenosine(1519) in 16S rRNA + 4 S-adenosyl-L-homocysteine + 4 H(+). In terms of biological role, specifically dimethylates two adjacent adenosines (A1518 and A1519) in the loop of a conserved hairpin near the 3'-end of 16S rRNA in the 30S particle. May play a critical role in biogenesis of 30S subunits. The sequence is that of Ribosomal RNA small subunit methyltransferase A from Deinococcus radiodurans (strain ATCC 13939 / DSM 20539 / JCM 16871 / CCUG 27074 / LMG 4051 / NBRC 15346 / NCIMB 9279 / VKM B-1422 / R1).